A 446-amino-acid polypeptide reads, in one-letter code: Maltoporin (446 aa).

The first 25 residues, 1 to 25 (MMITLRKLPLAVAVAAGVMSAQAMA), serve as a signal peptide directing secretion.

This sequence belongs to the porin LamB (TC 1.B.3) family. As to quaternary structure, homotrimer formed of three 18-stranded antiparallel beta-barrels, containing three independent channels.

It localises to the cell outer membrane. The catalysed reaction is beta-maltose(in) = beta-maltose(out). In terms of biological role, involved in the transport of maltose and maltodextrins. In Escherichia coli O127:H6 (strain E2348/69 / EPEC), this protein is Maltoporin.